The primary structure comprises 483 residues: SWI/SNF-related matrix-associated actin-dependent regulator of chromatin subfamily D member 3 (483 aa).

At A2 the chain carries N-acetylalanine. Residues 27–102 (RPGMPSGARM…ARSRSAKRRK (76 aa)) form a disordered region. A compositionally biased stretch (low complexity) spans 78–88 (QSQAQGQGQPV). The residue at position 178 (S178) is a Phosphoserine. One can recognise an SWIB/MDM2 domain in the interval 258-335 (YQPPQFKLDP…PQRLTALLLP (78 aa)).

The protein belongs to the SMARCD family. In terms of assembly, component of the multiprotein chromatin-remodeling complexes SWI/SNF: SWI/SNF-A (BAF), SWI/SNF-B (PBAF) and related complexes. The canonical complex contains a catalytic subunit (either SMARCA4/BRG1/BAF190A or SMARCA2/BRM/BAF190B) and at least SMARCE1, ACTL6A/BAF53, SMARCC1/BAF155, SMARCC2/BAF170, and SMARCB1/SNF5/BAF47. Other subunits specific to each of the complexes may also be present permitting several possible combinations developmentally and tissue specific. Component of the BAF complex, which includes at least actin (ACTB), ARID1A/BAF250A, ARID1B/BAF250B, SMARCA2/BRM, SMARCA4/BRG1/BAF190A, ACTL6A/BAF53, ACTL6B/BAF53B, SMARCE1/BAF57, SMARCC1/BAF155, SMARCC2/BAF170, SMARCB1/SNF5/INI1, and one or more SMARCD1/BAF60A, SMARCD2/BAF60B, or SMARCD3/BAF60C. In muscle cells, the BAF complex also contains DPF3. Component of neural progenitors-specific chromatin remodeling complex (npBAF complex) composed of at least, ARID1A/BAF250A or ARID1B/BAF250B, SMARCD1/BAF60A, SMARCD3/BAF60C, SMARCA2/BRM/BAF190B, SMARCA4/BRG1/BAF190A, SMARCB1/BAF47, SMARCC1/BAF155, SMARCE1/BAF57, SMARCC2/BAF170, PHF10/BAF45A, ACTL6A/BAF53A and actin. Component of neuron-specific chromatin remodeling complex (nBAF complex) composed of at least, ARID1A/BAF250A or ARID1B/BAF250B, SMARCD1/BAF60A, SMARCD3/BAF60C, SMARCA2/BRM/BAF190B, SMARCA4/BRG1/BAF190A, SMARCB1/BAF47, SMARCC1/BAF155, SMARCE1/BAF57, SMARCC2/BAF170, DPF1/BAF45B, DPF3/BAF45C, ACTL6B/BAF53B and actin. May be a component of the SWI/SNF-B (PBAF) chromatin remodeling complex, at least composed of SMARCA4/BRG1, SMARCB1/BAF47/SNF5, ACTL6A/BAF53A or ACTL6B/BAF53B, SMARCE1/BAF57, SMARCD1/BAF60A, SMARCD2/BAF60B, perhaps SMARCD3/BAF60C, SMARCC1/BAF155, SMARCC2/BAF170, PBRM1/BAF180, ARID2/BAF200 and actin. Component of SWI/SNF (GBAF) subcomplex, which includes at least BICRA or BICRAL (mutually exclusive), BRD9, SS18, SMARCA2/BRM, SMARCA4/BRG1/BAF190A, ACTL6A/BAF53, SMARCC1/BAF155, and SMARCD1/BAF60A. Interacts with SMARCA4/BRG1/BAF190A. The precise distribution of the related SMARCD1, SMARCD2 and SMARCD3 proteins among these and other SWI/SNF nucleosome-remodeling complexes is not fully known. May allow recruitment of SWI/SNF containing complexes specifically to promoters where these factors are located. Also interacts with several nuclear receptors including PPARG/NR1C3, RXRA/NR1F1, ESR1, NR5A1, NR5A2/LRH1 and other transcriptional activators including the HLH protein SREBF1/SREBP1 and the homeobox protein PBX1. Interacts with PRDM1/BLIMP1. As to expression, ubiquitously expressed.

Its subcellular location is the nucleus. Its function is as follows. Involved in transcriptional activation and repression of select genes by chromatin remodeling (alteration of DNA-nucleosome topology). Component of SWI/SNF chromatin remodeling complexes that carry out key enzymatic activities, changing chromatin structure by altering DNA-histone contacts within a nucleosome in an ATP-dependent manner. Stimulates nuclear receptor mediated transcription. Belongs to the neural progenitors-specific chromatin remodeling complex (npBAF complex) and the neuron-specific chromatin remodeling complex (nBAF complex). During neural development a switch from a stem/progenitor to a postmitotic chromatin remodeling mechanism occurs as neurons exit the cell cycle and become committed to their adult state. The transition from proliferating neural stem/progenitor cells to postmitotic neurons requires a switch in subunit composition of the npBAF and nBAF complexes. As neural progenitors exit mitosis and differentiate into neurons, npBAF complexes which contain ACTL6A/BAF53A and PHF10/BAF45A, are exchanged for homologous alternative ACTL6B/BAF53B and DPF1/BAF45B or DPF3/BAF45C subunits in neuron-specific complexes (nBAF). The npBAF complex is essential for the self-renewal/proliferative capacity of the multipotent neural stem cells. The nBAF complex along with CREST plays a role regulating the activity of genes essential for dendrite growth. The sequence is that of SWI/SNF-related matrix-associated actin-dependent regulator of chromatin subfamily D member 3 (Smarcd3) from Mus musculus (Mouse).